We begin with the raw amino-acid sequence, 405 residues long: Bifunctional enzyme IspD/IspF (405 aa).

The tract at residues 1–246 (MLQMPSKQPI…KLSASLLPDV (246 aa)) is 2-C-methyl-D-erythritol 4-phosphate cytidylyltransferase. The tract at residues 247-405 (RTGNGYDVHQ…TATVVYRGRT (159 aa)) is 2-C-methyl-D-erythritol 2,4-cyclodiphosphate synthase. 2 residues coordinate a divalent metal cation: aspartate 253 and histidine 255. 4-CDP-2-C-methyl-D-erythritol 2-phosphate-binding positions include 253-255 (DVH) and 279-280 (HS). Position 287 (histidine 287) interacts with a divalent metal cation. 4-CDP-2-C-methyl-D-erythritol 2-phosphate is bound by residues 301–303 (DIG), 377–380 (TTNE), phenylalanine 384, and arginine 387.

The protein in the N-terminal section; belongs to the IspD/TarI cytidylyltransferase family. IspD subfamily. It in the C-terminal section; belongs to the IspF family. A divalent metal cation is required as a cofactor.

It catalyses the reaction 2-C-methyl-D-erythritol 4-phosphate + CTP + H(+) = 4-CDP-2-C-methyl-D-erythritol + diphosphate. It carries out the reaction 4-CDP-2-C-methyl-D-erythritol 2-phosphate = 2-C-methyl-D-erythritol 2,4-cyclic diphosphate + CMP. Its pathway is isoprenoid biosynthesis; isopentenyl diphosphate biosynthesis via DXP pathway; isopentenyl diphosphate from 1-deoxy-D-xylulose 5-phosphate: step 2/6. It functions in the pathway isoprenoid biosynthesis; isopentenyl diphosphate biosynthesis via DXP pathway; isopentenyl diphosphate from 1-deoxy-D-xylulose 5-phosphate: step 4/6. In terms of biological role, bifunctional enzyme that catalyzes the formation of 4-diphosphocytidyl-2-C-methyl-D-erythritol from CTP and 2-C-methyl-D-erythritol 4-phosphate (MEP) (IspD), and catalyzes the conversion of 4-diphosphocytidyl-2-C-methyl-D-erythritol 2-phosphate (CDP-ME2P) to 2-C-methyl-D-erythritol 2,4-cyclodiphosphate (ME-CPP) with a corresponding release of cytidine 5-monophosphate (CMP) (IspF). In Rhizobium etli (strain CIAT 652), this protein is Bifunctional enzyme IspD/IspF.